Here is a 21-residue protein sequence, read N- to C-terminus: Cupiennin-6c (21 aa).

At S21 the chain carries Serine amide.

In terms of tissue distribution, expressed by the venom gland.

It localises to the secreted. The polypeptide is Cupiennin-6c (Cupiennius salei (American wandering spider)).